We begin with the raw amino-acid sequence, 682 residues long: Tail-specific protease (682 aa).

A signal peptide spans 1–22 (MNMFFRLTALAGLLAIAGQTFA). The 85-residue stretch at 238–322 (NTEMSLSLEG…SKVRLEILPA (85 aa)) folds into the PDZ domain. Catalysis depends on charge relay system residues Ser452, Asp463, and Lys477. Residues 635 to 650 (GKPELKKLDDLPKDYQ) show a composition bias toward basic and acidic residues. The tract at residues 635 to 654 (GKPELKKLDDLPKDYQEPDP) is disordered.

This sequence belongs to the peptidase S41A family.

It localises to the cell inner membrane. It carries out the reaction The enzyme shows specific recognition of a C-terminal tripeptide, Xaa-Yaa-Zaa, in which Xaa is preferably Ala or Leu, Yaa is preferably Ala or Tyr, and Zaa is preferably Ala, but then cleaves at a variable distance from the C-terminus. A typical cleavage is -Ala-Ala-|-Arg-Ala-Ala-Lys-Glu-Asn-Tyr-Ala-Leu-Ala-Ala.. In terms of biological role, involved in the cleavage of a C-terminal peptide of 11 residues from the precursor form of penicillin-binding protein 3 (PBP3). May be involved in protection of the bacterium from thermal and osmotic stresses. The sequence is that of Tail-specific protease (prc) from Escherichia coli (strain K12).